Consider the following 158-residue polypeptide: SsrA-binding protein (158 aa).

Belongs to the SmpB family.

It localises to the cytoplasm. Its function is as follows. Required for rescue of stalled ribosomes mediated by trans-translation. Binds to transfer-messenger RNA (tmRNA), required for stable association of tmRNA with ribosomes. tmRNA and SmpB together mimic tRNA shape, replacing the anticodon stem-loop with SmpB. tmRNA is encoded by the ssrA gene; the 2 termini fold to resemble tRNA(Ala) and it encodes a 'tag peptide', a short internal open reading frame. During trans-translation Ala-aminoacylated tmRNA acts like a tRNA, entering the A-site of stalled ribosomes, displacing the stalled mRNA. The ribosome then switches to translate the ORF on the tmRNA; the nascent peptide is terminated with the 'tag peptide' encoded by the tmRNA and targeted for degradation. The ribosome is freed to recommence translation, which seems to be the essential function of trans-translation. The polypeptide is SsrA-binding protein (Caldanaerobacter subterraneus subsp. tengcongensis (strain DSM 15242 / JCM 11007 / NBRC 100824 / MB4) (Thermoanaerobacter tengcongensis)).